Consider the following 287-residue polypeptide: MNKSIAPATSVVAGNVKFGNALPLSVIAGPCQLESRAHALEVASALKEIATRLGIGLVYKTSFDKANRTSAASARGLGLDAALPIFAEIRDHLGLPVLTDVHENEQCARAAEAVDILQIPAFLCRQTDLLLAAAATGRIVNVKKGQFLAPWDMGNVVSKITHAGNAKVLVTERGVSFGYNTLVSDMRALPIMAKTTGAPVIFDATHSVQQPGGKGTSSGGEREYVPVLARAAVAVGVAGVFIETHPDPDHAPSDGPNMVPLREFEALIKTLMEFDALAKKRSTVGAV.

Belongs to the KdsA family.

It localises to the cytoplasm. It carries out the reaction D-arabinose 5-phosphate + phosphoenolpyruvate + H2O = 3-deoxy-alpha-D-manno-2-octulosonate-8-phosphate + phosphate. The protein operates within carbohydrate biosynthesis; 3-deoxy-D-manno-octulosonate biosynthesis; 3-deoxy-D-manno-octulosonate from D-ribulose 5-phosphate: step 2/3. Its pathway is bacterial outer membrane biogenesis; lipopolysaccharide biosynthesis. This is 2-dehydro-3-deoxyphosphooctonate aldolase from Rhodopseudomonas palustris (strain TIE-1).